We begin with the raw amino-acid sequence, 210 residues long: Putative polysaccharide-binding protein (210 aa).

The signal sequence occupies residues 1-22 (MGFLKGTAAALTLLSAAAAASA). CBM1 domains lie at 23–62 (CGVL…AMPG), 63–105 (MMGQ…LANK), 125–165 (CGKE…APPP), and 166–210 (KMGE…PMHP).

This chain is Putative polysaccharide-binding protein, found in Porphyra purpurea (Red seaweed).